The following is a 250-amino-acid chain: Probable cytokinin riboside 5'-monophosphate phosphoribohydrolase LOGL6 (250 aa).

Substrate is bound by residues E98, 116-117 (RK), and 133-139 (GYGTLEE).

It belongs to the LOG family. In terms of tissue distribution, expressed in roots, leaves, stems, tiller buds, shoot apex, immature inflorescences and flowers.

It catalyses the reaction N(6)-(dimethylallyl)adenosine 5'-phosphate + H2O = N(6)-dimethylallyladenine + D-ribose 5-phosphate. The enzyme catalyses 9-ribosyl-trans-zeatin 5'-phosphate + H2O = trans-zeatin + D-ribose 5-phosphate. In terms of biological role, cytokinin-activating enzyme working in the direct activation pathway. Phosphoribohydrolase that converts inactive cytokinin nucleotides to the biologically active free-base forms. In Oryza sativa subsp. japonica (Rice), this protein is Probable cytokinin riboside 5'-monophosphate phosphoribohydrolase LOGL6 (LOGL6).